Here is a 195-residue protein sequence, read N- to C-terminus: Large ribosomal subunit protein uL5 (195 aa).

Belongs to the universal ribosomal protein uL5 family. As to quaternary structure, part of the 50S ribosomal subunit; part of the 5S rRNA/L5/L18/L25 subcomplex. Contacts the 5S rRNA and the P site tRNA. Forms a bridge to the 30S subunit in the 70S ribosome.

Functionally, this is one of the proteins that bind and probably mediate the attachment of the 5S RNA into the large ribosomal subunit, where it forms part of the central protuberance. In the 70S ribosome it contacts protein S13 of the 30S subunit (bridge B1b), connecting the 2 subunits; this bridge is implicated in subunit movement. Contacts the P site tRNA; the 5S rRNA and some of its associated proteins might help stabilize positioning of ribosome-bound tRNAs. This chain is Large ribosomal subunit protein uL5, found in Pelodictyon phaeoclathratiforme (strain DSM 5477 / BU-1).